Reading from the N-terminus, the 433-residue chain is Tol-Pal system protein TolB (433 aa).

Positions 1–21 (MRNLLRGMLVVICCMAGIAAA) are cleaved as a signal peptide.

This sequence belongs to the TolB family. In terms of assembly, the Tol-Pal system is composed of five core proteins: the inner membrane proteins TolA, TolQ and TolR, the periplasmic protein TolB and the outer membrane protein Pal. They form a network linking the inner and outer membranes and the peptidoglycan layer.

The protein localises to the periplasm. Functionally, part of the Tol-Pal system, which plays a role in outer membrane invagination during cell division and is important for maintaining outer membrane integrity. This Pseudomonas fluorescens (strain SBW25) protein is Tol-Pal system protein TolB.